The following is a 220-amino-acid chain: Eukaryotic translation initiation factor 3 subunit B (220 aa).

The sufficient for interaction with HCR1 and TIF32 stretch occupies residues 1–94 (MPEPIAFDES…LIIELDSAAA (94 aa)). The sufficient for interaction with PIC8 stretch occupies residues 1–220 (MPEPIAFDES…GVQAWGGERI (220 aa)). The RRM domain occupies 37–120 (HFVICDGAPI…HRLAVNKLPD (84 aa)).

Belongs to the eIF-3 subunit B family. Component of the eukaryotic translation initiation factor 3 (eIF-3) complex.

Its subcellular location is the cytoplasm. Its function is as follows. RNA-binding component of the eukaryotic translation initiation factor 3 (eIF-3) complex, which is involved in protein synthesis of a specialized repertoire of mRNAs and, together with other initiation factors, stimulates binding of mRNA and methionyl-tRNAi to the 40S ribosome. The eIF-3 complex specifically targets and initiates translation of a subset of mRNAs involved in cell proliferation. The sequence is that of Eukaryotic translation initiation factor 3 subunit B (TIF32) from Pichia angusta (Yeast).